The sequence spans 645 residues: MEQINIQFPDGNKKAFDKGTTTEDIAQSISPGLRKKAVAGKFNGQLVDLTKPLETDGSIEIVTPGSEEALEVLRHSTAHLMAHAIKRLYGNVKFGVGPVIEGGFYYDFDIDQNISSDDFEQIEKTMKQIVNENMKIERKVVSRDEAKELFSNDEYKLELIDAIPEDENVTLYSQGDFTDLCRGVHVPSTAKIKEFKLLSTAGAYWRGDSNNKMLQRIYGTAFFDKKELKAHLQMLEERKERDHRKIGKELELFTNSQLVGAGLPLWLPNGATIRREIERYIVDKEVSMGYDHVYTPVLANVDLYKTSGHWDHYQEDMFPPMQLDETESMVLRPMNCPHHMMIYANKPHSYRELPIRIAELGTMHRYEASGAVSGLQRVRGMTLNDSHIFVRPDQIKEEFKRVVNMIIDVYKDFGFEDYSFRLSYRDPEDKEKYFDDDDMWNKAENMLKEAADELGLSYEEAIGEAAFYGPKLDVQVKTAMGKEETLSTAQLDFLLPERFDLTYIGQDGEHHRPVVIHRGVVSTMERFVAFLTEETKGAFPTWLAPKQVQIIPVNVDLHYDYARQLQDELKSQGVRVSIDDRNEKMGYKIREAQMQKIPYQIVVGDKEVENNQVNVRQYGSQDQETVEKDEFIWNLVDEIRLKKHR.

Residues 1–63 (MEQINIQFPD…ETDGSIEIVT (63 aa)) form the TGS domain. A catalytic region spans residues 242–540 (DHRKIGKELE…LTEETKGAFP (299 aa)). Residues cysteine 336, histidine 387, and histidine 517 each contribute to the Zn(2+) site.

The protein belongs to the class-II aminoacyl-tRNA synthetase family. Homodimer. Requires Zn(2+) as cofactor.

The protein localises to the cytoplasm. The enzyme catalyses tRNA(Thr) + L-threonine + ATP = L-threonyl-tRNA(Thr) + AMP + diphosphate + H(+). Its function is as follows. Catalyzes the attachment of threonine to tRNA(Thr) in a two-step reaction: L-threonine is first activated by ATP to form Thr-AMP and then transferred to the acceptor end of tRNA(Thr). Also edits incorrectly charged L-seryl-tRNA(Thr). The chain is Threonine--tRNA ligase from Staphylococcus aureus (strain JH1).